Reading from the N-terminus, the 393-residue chain is Flavohemoprotein (393 aa).

The Globin domain maps to 1–139 (MLSNAQRALI…LADLLIEAEE (139 aa)). Residue His-85 coordinates heme b. Active-site charge relay system residues include Tyr-95 and Glu-138. Residues 150–393 (GGWRGVRRFR…FFGPAAALDA (244 aa)) are reductase. The FAD-binding FR-type domain occupies 153-256 (RGVRRFRVAR…FPPAGDFVLR (104 aa)). FAD is bound by residues Tyr-191 and 205–208 (RNYS). Position 268-273 (268-273 (GVGITP)) interacts with NADP(+). FAD is bound at residue 384-387 (FFGP).

The protein belongs to the globin family. Two-domain flavohemoproteins subfamily. This sequence in the C-terminal section; belongs to the flavoprotein pyridine nucleotide cytochrome reductase family. Heme b serves as cofactor. Requires FAD as cofactor.

It carries out the reaction 2 nitric oxide + NADPH + 2 O2 = 2 nitrate + NADP(+) + H(+). The enzyme catalyses 2 nitric oxide + NADH + 2 O2 = 2 nitrate + NAD(+) + H(+). Its function is as follows. Is involved in NO detoxification in an aerobic process, termed nitric oxide dioxygenase (NOD) reaction that utilizes O(2) and NAD(P)H to convert NO to nitrate, which protects the bacterium from various noxious nitrogen compounds. Therefore, plays a central role in the inducible response to nitrosative stress. The polypeptide is Flavohemoprotein (Pseudomonas aeruginosa (strain ATCC 15692 / DSM 22644 / CIP 104116 / JCM 14847 / LMG 12228 / 1C / PRS 101 / PAO1)).